The sequence spans 519 residues: uncharacterized protein (519 aa).

It belongs to the glycogen phosphorylase family.

This is an uncharacterized protein from Methanocaldococcus jannaschii (strain ATCC 43067 / DSM 2661 / JAL-1 / JCM 10045 / NBRC 100440) (Methanococcus jannaschii).